Consider the following 900-residue polypeptide: Phospholipase DDHD1 (900 aa).

Disordered stretches follow at residues 1–28 (MNYP…ELGS), 100–152 (LRYY…GGPA), and 202–233 (GARP…DEDR). 2 positions are modified to phosphoserine: S8 and S11. A compositionally biased stretch (gly residues) spans 130–140 (SGGGGATGGSP). The active site involves S537. Positions 611–886 (LKFKVENFFC…ALFLLTFMYK (276 aa)) constitute a DDHD domain. 2 disordered regions span residues 706–725 (AKEP…PSPV) and 768–801 (SSTT…TQTL). Polar residues predominate over residues 710–725 (TSVSENEGISTIPSPV). Phosphoserine is present on S723. The segment covering 776–787 (TSKDSMEDEKKP) has biased composition (basic and acidic residues). A compositionally biased stretch (polar residues) spans 791–801 (PSATTVGTQTL).

It belongs to the PA-PLA1 family. As to quaternary structure, forms homooligomers and, to a much smaller extent, heterooligomers with DDHD2. In terms of tissue distribution, highly expressed in testis. Also expressed in brain, spleen and lung. Only expressed in cerebellum in fetal brain.

It localises to the cytoplasm. The catalysed reaction is a 1,2-diacyl-sn-glycero-3-phosphate + H2O = a 2-acyl-sn-glycerol 3-phosphate + a fatty acid + H(+). It catalyses the reaction a 1,2-diacyl-sn-glycero-3-phospho-(1D-myo-inositol) + H2O = a 2-acyl-sn-glycero-3-phospho-D-myo-inositol + a fatty acid + H(+). It carries out the reaction 1-octadecanoyl-2-(5Z,8Z,11Z,14Z-eicosatetraenoyl)-sn-glycero-3-phospho-(1D-myo-inositol) + H2O = 2-(5Z,8Z,11Z,14Z-eicosatetraenoyl)-sn-glycero-3-phospho-(1D-myo-inositol) + octadecanoate + H(+). The enzyme catalyses a 1-acyl-2-(5Z,8Z,11Z,14Z-eicosatetraenoyl)-sn-glycero-3-phospho-(1D-myo-inositol) + H2O = 2-(5Z,8Z,11Z,14Z-eicosatetraenoyl)-sn-glycero-3-phospho-(1D-myo-inositol) + a fatty acid + H(+). The catalysed reaction is 1,2-dihexadecanoyl-sn-glycero-3-phospho-(1D-myo-inositol) + H2O = 2-hexadecanoyl-sn-glycero-3-phospho-(1D-myo-inositol) + hexadecanoate + H(+). It catalyses the reaction a 1-acyl-2-(5Z,8Z,11Z,14Z)-eicosatetraenoyl-sn-glycero-3-phosphate + H2O = 2-(5Z,8Z,11Z,14Z-eicosatetraenoyl)-sn-glycero-3-phosphate + a fatty acid + H(+). It carries out the reaction 1,2-di-(9Z-octadecenoyl)-sn-glycero-3-phosphate + H2O = 2-(9Z-octadecenoyl)-sn-glycero-3-phosphate + (9Z)-octadecenoate + H(+). The enzyme catalyses 1-hexadecanoyl-2-(9Z-octadecenoyl)-sn-glycero-3-phosphate + H2O = 2-(9Z-octadecenoyl)-sn-glycero-3-phosphate + hexadecanoate + H(+). The catalysed reaction is 1-hexadecanoyl-2-(9Z-octadecenoyl)-sn-glycero-3-phospho-L-serine + H2O = 2-(9Z-octadecenoyl)-sn-glycero-3-phospho-L-serine + hexadecanoate + H(+). It catalyses the reaction 1,2-di-(5Z,8Z,11Z,14Z)-eicosatetraenoyl-sn-glycero-3-phosphate + H2O = 2-(5Z,8Z,11Z,14Z-eicosatetraenoyl)-sn-glycero-3-phosphate + (5Z,8Z,11Z,14Z)-eicosatetraenoate + H(+). It carries out the reaction 1-octadecanoyl-2-(5Z,8Z,11Z,14Z-eicosatetraenoyl)-sn-glycero-3-phosphate + H2O = 2-(5Z,8Z,11Z,14Z-eicosatetraenoyl)-sn-glycero-3-phosphate + octadecanoate + H(+). The enzyme catalyses a 1,2-diacyl-sn-glycero-3-phosphocholine + H2O = a 2-acyl-sn-glycero-3-phosphocholine + a fatty acid + H(+). The catalysed reaction is a 1,2-diacyl-sn-glycero-3-phosphoethanolamine + H2O = a 2-acyl-sn-glycero-3-phosphoethanolamine + a fatty acid + H(+). It catalyses the reaction a 1,2-diacyl-sn-glycero-3-phospho-L-serine + H2O = a 2-acyl-sn-glycero-3-phospho-L-serine + a fatty acid + H(+). It carries out the reaction a 1,2-diacyl-sn-glycero-3-phospho-(1'-sn-glycerol) + H2O = 2-acyl-sn-glycero-3-phospho-(1'-sn-glycerol) + a fatty acid + H(+). The enzyme catalyses 1-hexadecanoyl-2-(9Z-octadecenoyl)-sn-glycero-3-phospho-(1'-sn-glycerol) + H2O = 2-(9Z-octadecenoyl)-sn-glycero-3-phospho-(1'-sn-glycerol) + hexadecanoate + H(+). The catalysed reaction is 1-acyl-2-(5Z,8Z,11Z,14Z-eicosatetraenoyl)-sn-glycero-3-phosphocholine + H2O = 2-(5Z,8Z,11Z,14Z)-eicosatetraenoyl-sn-glycero-3-phosphocholine + a fatty acid + H(+). It catalyses the reaction 1-acyl-2-(5Z,8Z,11Z,14Z)-eicosatetraenoyl-sn-glycero-3-phosphoethanolamine + H2O = 2-(5Z,8Z,11Z,14Z)-eicosatetraenoyl-sn-glycero-3-phosphoethanolamine + a fatty acid + H(+). It carries out the reaction 1-(9Z-octadecenoyl)-2-(7Z,10Z,13Z,16Z,19Z-docosapentaenoyl)-sn-glycero-3-phospho-1D-myo-inositol + H2O = 2-(7Z,10Z,13Z,16Z,19Z-docosapentaenoyl)-sn-glycero-3-phospho-1D-myo-inositol + (9Z)-octadecenoate + H(+). The enzyme catalyses 1-(9Z-octadecenoyl)-2-(5Z,8Z,11Z,14Z-eicosatetraenoyl)-sn-glycero-3-phospho-1D-myo-inositol + H2O = 2-(5Z,8Z,11Z,14Z-eicosatetraenoyl)-sn-glycero-3-phospho-(1D-myo-inositol) + (9Z)-octadecenoate + H(+). The catalysed reaction is 1,2-di-(9Z-octadecenoyl)-sn-glycero-3-phospho-1D-myo-inositol + H2O = 2-(9Z-octadecenoyl)-sn-glycero-3-phospho-1D-myo-inositol + (9Z)-octadecenoate + H(+). It catalyses the reaction 1-(9Z-octadecenoyl)-2-(8Z,11Z,14Z-eicosatrienoyl)-sn-glycero-3-phospho-1D-myo-inositol + H2O = 2-(8Z,11Z,14Z-eicosatrienoyl)-sn-glycero-3-phospho-1D-myo-inositol + (9Z)-octadecenoate + H(+). It carries out the reaction 1,2-di-(9Z-octadecenoyl)-sn-glycero-3-phosphocholine + H2O = (9Z-octadecenoyl)-sn-glycero-3-phosphocholine + (9Z)-octadecenoate + H(+). The protein operates within phospholipid metabolism; phosphatidylinositol metabolism. With respect to regulation, phosphatidate (1,2-diacyl-sn-glycero-3-phosphate, PA) can positively regulate phospholipase A1 activity. In terms of biological role, phospholipase A1 (PLA1) that hydrolyzes ester bonds at the sn-1 position of glycerophospholipids producing a free fatty acid and a lysophospholipid. Prefers phosphatidate (1,2-diacyl-sn-glycero-3-phosphate, PA) as substrate in vitro, but can efficiently hydrolyze phosphatidylinositol (1,2-diacyl-sn-glycero-3-phospho-(1D-myo-inositol), PI), as well as a range of other glycerophospholipid substrates such as phosphatidylcholine (1,2-diacyl-sn-glycero-3-phosphocholine, PC), phosphatidylethanolamine (1,2-diacyl-sn-glycero-3-phosphoethanolamine, PE), phosphatidylserine (1,2-diacyl-sn-glycero-3-phospho-L-serine, PS) and phosphatidylglycerol (1,2-diacyl-sn-glycero-3-phospho-(1'-sn-glycerol), PG). Involved in the regulation of the endogenous content of polyunsaturated PI and PS lipids in the nervous system. Changes in these lipids extend to downstream metabolic products like PI phosphates PIP and PIP2, which play fundamental roles in cell biology. Regulates mitochondrial morphology. These dynamic changes may be due to PA hydrolysis at the mitochondrial surface. May play a regulatory role in spermatogenesis or sperm function. This chain is Phospholipase DDHD1, found in Homo sapiens (Human).